We begin with the raw amino-acid sequence, 123 residues long: uncharacterized protein (123 aa).

Helical transmembrane passes span 1-21 (MVLP…AVGC) and 103-123 (LESS…ILLF).

It is found in the membrane. This is an uncharacterized protein from Saccharomyces cerevisiae (strain ATCC 204508 / S288c) (Baker's yeast).